Reading from the N-terminus, the 463-residue chain is Exodeoxyribonuclease 7 large subunit (463 aa).

The protein belongs to the XseA family. Heterooligomer composed of large and small subunits.

The protein resides in the cytoplasm. The catalysed reaction is Exonucleolytic cleavage in either 5'- to 3'- or 3'- to 5'-direction to yield nucleoside 5'-phosphates.. Its function is as follows. Bidirectionally degrades single-stranded DNA into large acid-insoluble oligonucleotides, which are then degraded further into small acid-soluble oligonucleotides. This chain is Exodeoxyribonuclease 7 large subunit, found in Klebsiella pneumoniae subsp. pneumoniae (strain ATCC 700721 / MGH 78578).